The following is a 645-amino-acid chain: Translation factor GUF1 homolog, mitochondrial (645 aa).

Residues 40-215 enclose the tr-type G domain; it reads EKIRNFGIVA…AIVERVPAPT (176 aa). Residues 49 to 56, 108 to 112, and 162 to 165 each bind GTP; these read AHVDHGKS, DTPGH, and NKID.

It belongs to the TRAFAC class translation factor GTPase superfamily. Classic translation factor GTPase family. LepA subfamily.

The protein resides in the mitochondrion inner membrane. The enzyme catalyses GTP + H2O = GDP + phosphate + H(+). Promotes mitochondrial protein synthesis. May act as a fidelity factor of the translation reaction, by catalyzing a one-codon backward translocation of tRNAs on improperly translocated ribosomes. Binds to mitochondrial ribosomes in a GTP-dependent manner. The sequence is that of Translation factor GUF1 homolog, mitochondrial from Caenorhabditis briggsae.